The chain runs to 291 residues: Nucleotide-binding protein MSMEG_3079/MSMEI_3001 (291 aa).

14-21 (GLSGAGRG) serves as a coordination point for ATP. 65-68 (DVRS) is a binding site for GTP.

The protein belongs to the RapZ-like family.

In terms of biological role, displays ATPase and GTPase activities. This chain is Nucleotide-binding protein MSMEG_3079/MSMEI_3001, found in Mycolicibacterium smegmatis (strain ATCC 700084 / mc(2)155) (Mycobacterium smegmatis).